A 376-amino-acid chain; its full sequence is MVSERSSNQSHPLDYYMNNQSTDHHTIAEDLEIQLTENDKQRIKSISEQIEPLNHEGLLKYGANLQQKMSHFSHQILDDVQSKDMGPVGETLSQLMGKLKSVNPNDINPEKQSRLKRLFKRTKASINEVFSRMQSVSSQIDRITIQLEKHKDQLTKDVEFLDQLYQQNKTYFDNVTLYILAAQKKKKEILTETIPQLREKAHQTGNQMDIQATADMEQFVDRLDKRIYDLQLSRQIAIQTAPQIRMIQNVNQALAEKIQSSILTSIPLWKNQMAIALTLMRQRNAVSAQRSVTDTTNELLTQNASMLKENAIETAAENERGIVDIETLKTTQNDIIETIEQTLQIQEDGRQKRQVAEKELNELEKDLKQHLLAMRK.

It belongs to the TelA family.

The polypeptide is TelA-like protein SE_1089 (Staphylococcus epidermidis (strain ATCC 12228 / FDA PCI 1200)).